The sequence spans 657 residues: Pentatricopeptide repeat-containing protein CRR2, chloroplastic (657 aa).

The transit peptide at 1–51 directs the protein to the chloroplast; that stretch reads MFLSHPPQVIQPTYHTVNFLPRSPLKPPSCSVALNNPSISSGAGAKISNNQ. 12 PPR repeats span residues 45-75, 76-110, 111-141, 142-176, 177-215, 216-246, 247-277, 284-318, 319-349, 350-384, 385-420, and 421-451; these read AKISNNQLIQSLCKEGKLKQAIRVLSQESSP, SQQTYELLILCCGHRSSLSDALRVHRHILDNGSDQ, DPFLATKLIGMYSDLGSVDYARKVFDKTRKR, TIYVWNALFRALTLAGHGEEVLGLYWKMNRIGVES, DRFTYTYVLKACVASECTVNHLMKGKEIHAHLTRRGYSS, HVYIMTTLVDMYARFGCVDYASYVFGGMPVR, NVVSWSAMIACYAKNGKAFEALRTFREMMRE, NSVTMVSVLQACASLAALEQGKLIHGYILRRGLDS, ILPVISALVTMYGRCGKLEVGQRVFDRMHDR, DVVSWNSLISSYGVHGYGKKAIQIFEEMLANGASP, TPVTFVSVLGACSHEGLVEEGKRLFETMWRDHGIKP, and QIEHYACMVDLLGRANRLDEAAKMVQDMRTE. The tract at residues 456-531 is type E motif; sequence VWGSLLGSCR…LPGRCWMEVR (76 aa). Residues 532-562 are type E(+) motif; sequence RKMYSFVSVDEFNPLMEQIHAFLVKLAEDMK. The interval 563–657 is type DYW motif; that stretch reads EKGYIPQTKG…NGVCSCGDYW (95 aa).

This sequence belongs to the PPR family. PCMP-H subfamily.

The protein resides in the plastid. The protein localises to the chloroplast. Its function is as follows. Required for the intergenic processing between chloroplast rsp7 and ndhB transcripts. Necessary for chloroplast NADH dehydrogenase-like (NDH) complex-dependent cyclic electron transport around PSI (CET). In Arabidopsis thaliana (Mouse-ear cress), this protein is Pentatricopeptide repeat-containing protein CRR2, chloroplastic.